A 333-amino-acid polypeptide reads, in one-letter code: DNA-directed RNA polymerase subunit alpha (333 aa).

An alpha N-terminal domain (alpha-NTD) region spans residues 1-234 (MQISVNEFLT…QQLAAFVDLK (234 aa)). An alpha C-terminal domain (alpha-CTD) region spans residues 248–333 (IDPILLRPVD…SLKKDDKATA (86 aa)).

Belongs to the RNA polymerase alpha chain family. As to quaternary structure, homodimer. The RNAP catalytic core consists of 2 alpha, 1 beta, 1 beta' and 1 omega subunit. When a sigma factor is associated with the core the holoenzyme is formed, which can initiate transcription.

It carries out the reaction RNA(n) + a ribonucleoside 5'-triphosphate = RNA(n+1) + diphosphate. Functionally, DNA-dependent RNA polymerase catalyzes the transcription of DNA into RNA using the four ribonucleoside triphosphates as substrates. The sequence is that of DNA-directed RNA polymerase subunit alpha from Pseudomonas entomophila (strain L48).